Reading from the N-terminus, the 467-residue chain is Megakaryocyte-associated tyrosine-protein kinase (467 aa).

Residues 1 to 20 (MPTQRWAPGTQCMTKCENSR) are disordered. In terms of domain architecture, SH3 spans 7-69 (APGTQCMTKC…AAAALRQREA (63 aa)). Positions 81–170 (WFHGKISGQE…AICTKLVKPK (90 aa)) constitute an SH2 domain. The Protein kinase domain occupies 194–443 (LTLGAQIGEG…IVEKLGRELR (250 aa)). Residues 200–208 (IGEGEFGAV) and Lys221 each bind ATP. Asp311 acts as the Proton acceptor in catalysis. The segment at 445–467 (VGVAAPAGGQEAEGSAPTRSQDP) is disordered.

Belongs to the protein kinase superfamily. Tyr protein kinase family. CSK subfamily. As to quaternary structure, interacts with KIT. Enriched in lymphoid tissues.

The protein localises to the cytoplasm. It is found in the membrane. The enzyme catalyses L-tyrosyl-[protein] + ATP = O-phospho-L-tyrosyl-[protein] + ADP + H(+). Functionally, could play a significant role in the signal transduction of hematopoietic cells. May regulate tyrosine kinase activity of SRC-family members in brain. This chain is Megakaryocyte-associated tyrosine-protein kinase (Matk), found in Rattus norvegicus (Rat).